We begin with the raw amino-acid sequence, 262 residues long: tRNA pseudouridine synthase A (262 aa).

Aspartate 51 functions as the Nucleophile in the catalytic mechanism. Tyrosine 109 serves as a coordination point for substrate.

The protein belongs to the tRNA pseudouridine synthase TruA family. In terms of assembly, homodimer.

The catalysed reaction is uridine(38/39/40) in tRNA = pseudouridine(38/39/40) in tRNA. Functionally, formation of pseudouridine at positions 38, 39 and 40 in the anticodon stem and loop of transfer RNAs. This is tRNA pseudouridine synthase A from Glaesserella parasuis serovar 5 (strain SH0165) (Haemophilus parasuis).